We begin with the raw amino-acid sequence, 96 residues long: Small ribosomal subunit protein bS6 (96 aa).

Belongs to the bacterial ribosomal protein bS6 family.

Binds together with bS18 to 16S ribosomal RNA. This Bacillus mycoides (strain KBAB4) (Bacillus weihenstephanensis) protein is Small ribosomal subunit protein bS6.